The chain runs to 466 residues: Flagellum-specific ATP synthase (466 aa).

An ATP-binding site is contributed by 194 to 201 (SSSGLGKS).

It belongs to the ATPase alpha/beta chains family.

It is found in the cytoplasm. It carries out the reaction ATP + H2O + 4 H(+)(in) = ADP + phosphate + 5 H(+)(out). Functionally, probable catalytic subunit of a protein translocase for flagellum-specific export, or a proton translocase involved in local circuits at the flagellum. May be involved in a specialized protein export pathway that proceeds without signal peptide cleavage. This chain is Flagellum-specific ATP synthase (fliI), found in Buchnera aphidicola subsp. Schizaphis graminum (strain Sg).